Consider the following 172-residue polypeptide: Ribosome maturation factor RimM (172 aa).

One can recognise a PRC barrel domain in the interval Glu94–Met167.

The protein belongs to the RimM family. In terms of assembly, binds ribosomal protein uS19.

Its subcellular location is the cytoplasm. In terms of biological role, an accessory protein needed during the final step in the assembly of 30S ribosomal subunit, possibly for assembly of the head region. Essential for efficient processing of 16S rRNA. May be needed both before and after RbfA during the maturation of 16S rRNA. It has affinity for free ribosomal 30S subunits but not for 70S ribosomes. The protein is Ribosome maturation factor RimM of Carboxydothermus hydrogenoformans (strain ATCC BAA-161 / DSM 6008 / Z-2901).